The sequence spans 3658 residues: E3 ubiquitin-protein ligase UPL2 (3658 aa).

A compositionally biased stretch (basic and acidic residues) spans 884–893; the sequence is DEKKSVDRAS. The disordered stretch occupies residues 884 to 914; the sequence is DEKKSVDRASDNSVSASSSTAERESDEDSSN. Positions 894 to 903 are enriched in low complexity; sequence DNSVSASSST. Positions 1271-1312 constitute a UBA domain; that stretch reads QPDEAIVGMIVEMGFSRSRAEDALRRVGTNSVEMAMDWLFTN. The 20-residue stretch at 1318–1337 folds into the UIM domain; the sequence is QEDDELAQALALSLGNSSET. Disordered stretches follow at residues 1331-1360, 1702-1733, 2004-2038, 2052-2072, 2113-2204, 2293-2313, 2417-2487, 2503-2591, and 2958-2987; these read LGNSSETPKLEDTEKPVDVPQEEAEPKEPP, VSGSEHGFSLNEPLGISENKLHDGSGKCSKSH, AEQLKSEVPNEQKNTDSDERHDSHGTSTSTEVDEL, VDNGQEQPQVSSQSEGERGSS, HVED…DDMV, PLFSRPSQTGNTASVSASAGS, ERET…EGGG, SAQG…PEVN, and SPSSGVPEKLENKPVGEEASSETQKDAESE. The segment covering 1338-1347 has biased composition (basic and acidic residues); the sequence is PKLEDTEKPV. The segment covering 2007 to 2027 has biased composition (basic and acidic residues); that stretch reads LKSEVPNEQKNTDSDERHDSH. Positions 2028 to 2038 are enriched in polar residues; sequence GTSTSTEVDEL. Acidic residues-rich tracts occupy residues 2117–2144 and 2156–2204; these read RADDDVDDDMDDEGEDDEGDDEDADSVE and DVED…DDMV. Residues 2297-2313 show a composition bias toward polar residues; it reads RPSQTGNTASVSASAGS. Positions 2422–2431 are enriched in low complexity; the sequence is TTEVQEQQQP. The segment covering 2503 to 2518 has biased composition (polar residues); sequence SAQGQSDTSGIQNVSV. Position 2582 is a phosphoserine (Ser-2582). Residues 3317 to 3658 enclose the HECT domain; sequence SPQDLKGRLN…HEANEGFGFA (342 aa). The Glycyl thioester intermediate role is filled by Cys-3625.

It belongs to the UPL family. TOM1/PTR1 subfamily. As to expression, widely expressed. Expressed in root, stem, cauline and rosette leaf, seedling and flower (at protein level).

The enzyme catalyses S-ubiquitinyl-[E2 ubiquitin-conjugating enzyme]-L-cysteine + [acceptor protein]-L-lysine = [E2 ubiquitin-conjugating enzyme]-L-cysteine + N(6)-ubiquitinyl-[acceptor protein]-L-lysine.. Its pathway is protein modification; protein ubiquitination. Its function is as follows. Probable E3 ubiquitin-protein ligase which mediates ubiquitination and subsequent proteasomal degradation of target proteins. The polypeptide is E3 ubiquitin-protein ligase UPL2 (UPL2) (Arabidopsis thaliana (Mouse-ear cress)).